The chain runs to 294 residues: RAB7A-interacting MON1-CCZ1 complex subunit 1 (294 aa).

Position 2 is an N-acetylalanine (Ala2).

This sequence belongs to the RIMOC1 family. As to quaternary structure, interacts with the MON1A-CCZ1B complex. Interacts with GDP-bound RAB7A and promotes its interaction with the MON1A-CCZ1B complex.

It localises to the cytoplasm. Its subcellular location is the cytosol. Plays an important role in the removal of damaged mitochondria via mitophagy by controlling the stability and localization of RAB7A. Required for the recruitment of RAB7A and ATG9A vesicles to damaged mitochondria and promotes the stability of RAB7A by inhibiting its proteasomal degradation during mitophagy. This Homo sapiens (Human) protein is RAB7A-interacting MON1-CCZ1 complex subunit 1.